Reading from the N-terminus, the 116-residue chain is Large ribosomal subunit protein bL19 (116 aa).

Belongs to the bacterial ribosomal protein bL19 family.

This protein is located at the 30S-50S ribosomal subunit interface and may play a role in the structure and function of the aminoacyl-tRNA binding site. The chain is Large ribosomal subunit protein bL19 from Chloroflexus aurantiacus (strain ATCC 29366 / DSM 635 / J-10-fl).